A 516-amino-acid polypeptide reads, in one-letter code: MNAVVASQNKNDRSFSNMESESSSNVEKSEKENHHQSLPDENWTPFLFFCISSIALASFQDGFQIGCINAPGPLIIDWIKKCHFELFGEVLSQYQADFIWSVAVSMFSVGGMFGSFCSGFLADKFGRKSTLLYNNILALLAAVCLSTSKLFNFYPMIVFGRFLVGLNCGITSGLVPMFLTELAPANLRGKCGSFHQLNISVAIVLSQALGLPQIFGTQVGWPYIFACVAIPTFLQLATIPFCVESPKYLISKLNDREEARRILEKLRGHTKVDEELEHMVQETMVTVEPLHQPGYVSLFKGDNQWPMIVSILMMFSQQFSGISAVTFYSTLIFKRNGLSGNEPMYATVGFGCIKLIATFGCLFLIDHPKFGRKRLHIAGLSGMCISSILIVITLTLSNAGYHWASYMNVLFILSFVVTFAFGPGPIPWFFTSELFDSATRGRAAAVSATSNWVANWMVGLTFLPINNIIHQYAFLMFTFFTFTFAIFTWKFVPETKGKSPSAIRKELAFMRKRICS.

Residues 1-37 are disordered; it reads MNAVVASQNKNDRSFSNMESESSSNVEKSEKENHHQS. At 1 to 47 the chain is on the cytoplasmic side; sequence MNAVVASQNKNDRSFSNMESESSSNVEKSEKENHHQSLPDENWTPFL. The span at 14-26 shows a compositional bias: low complexity; it reads SFSNMESESSSNV. Positions 27–37 are enriched in basic and acidic residues; sequence EKSEKENHHQS. The chain crosses the membrane as a helical span at residues 48 to 68; it reads FFCISSIALASFQDGFQIGCI. Residues 69-101 lie on the Extracellular side of the membrane; it reads NAPGPLIIDWIKKCHFELFGEVLSQYQADFIWS. The chain crosses the membrane as a helical span at residues 102-122; that stretch reads VAVSMFSVGGMFGSFCSGFLA. At 123 to 138 the chain is on the cytoplasmic side; it reads DKFGRKSTLLYNNILA. The chain crosses the membrane as a helical span at residues 139-159; it reads LLAAVCLSTSKLFNFYPMIVF. At 160–161 the chain is on the extracellular side; that stretch reads GR. A helical transmembrane segment spans residues 162–182; the sequence is FLVGLNCGITSGLVPMFLTEL. The Cytoplasmic segment spans residues 183 to 200; sequence APANLRGKCGSFHQLNIS. The chain crosses the membrane as a helical span at residues 201 to 221; that stretch reads VAIVLSQALGLPQIFGTQVGW. Proline 222 is a topological domain (extracellular). Residues 223-243 form a helical membrane-spanning segment; sequence YIFACVAIPTFLQLATIPFCV. At 244–306 the chain is on the cytoplasmic side; that stretch reads ESPKYLISKL…SLFKGDNQWP (63 aa). A helical membrane pass occupies residues 307 to 327; sequence MIVSILMMFSQQFSGISAVTF. Residues 328–344 are Extracellular-facing; the sequence is YSTLIFKRNGLSGNEPM. Residues 345–365 form a helical membrane-spanning segment; the sequence is YATVGFGCIKLIATFGCLFLI. At 366–376 the chain is on the cytoplasmic side; sequence DHPKFGRKRLH. Residues 377–397 traverse the membrane as a helical segment; sequence IAGLSGMCISSILIVITLTLS. Over 398-409 the chain is Extracellular; it reads NAGYHWASYMNV. The helical transmembrane segment at 410–430 threads the bilayer; that stretch reads LFILSFVVTFAFGPGPIPWFF. Over 431-444 the chain is Cytoplasmic; the sequence is TSELFDSATRGRAA. The helical transmembrane segment at 445–465 threads the bilayer; the sequence is AVSATSNWVANWMVGLTFLPI. Over 466 to 471 the chain is Extracellular; that stretch reads NNIIHQ. Residues 472 to 492 form a helical membrane-spanning segment; the sequence is YAFLMFTFFTFTFAIFTWKFV. The Cytoplasmic segment spans residues 493-516; that stretch reads PETKGKSPSAIRKELAFMRKRICS.

This sequence belongs to the major facilitator superfamily. Sugar transporter (TC 2.A.1.1) family. In terms of tissue distribution, expressed in seam cells from the early embryonic stage through the L2 stage (at protein level).

It localises to the cell membrane. Appears to have no transport activity for glucose. The protein is Facilitated glucose transporter homolog of Caenorhabditis elegans.